An 89-amino-acid chain; its full sequence is MFELIPRIILELYGCCWTPLGVLFGYTLFRNACQFQFLTFSQFTNKNTVTFFILYNRMPNITAHEIRHNYQVLAVDVCSTFAFAERLQC.

This is an uncharacterized protein from Saccharomyces cerevisiae (strain ATCC 204508 / S288c) (Baker's yeast).